A 359-amino-acid polypeptide reads, in one-letter code: Mitochondrial glutathione transporter SLC25A39 (359 aa).

Topologically, residues 1-14 are mitochondrial intermembrane; it reads MDDQDPGGISPLQQ. 3 Solcar repeats span residues 9–151, 159–243, and 253–347; these read ISPL…LKAF, SDLY…VKSW, and TSVG…GKSF. A helical membrane pass occupies residues 15-35; that stretch reads MVASGAGAVVTSLFMTPLDVV. Residues 36-121 lie on the Mitochondrial matrix side of the membrane; that stretch reads KVRLQSQRPS…VKIVRHEGTR (86 aa). Residues C74, C78, C88, and C94 each contribute to the [2Fe-2S] cluster site. Residues 122–142 form a helical membrane-spanning segment; that stretch reads TLWSGLPATLVMTVPATAIYF. Residues 143–164 lie on the Mitochondrial intermembrane side of the membrane; it reads TAYDQLKAFLCGQSLTSDLYAP. The chain crosses the membrane as a helical span at residues 165–185; the sequence is MVAGALARMGTVTVVSPLELV. Topologically, residues 186–214 are mitochondrial matrix; that stretch reads RTKLQAQHVSYRELASSVQAAVTQGGWRS. A helical transmembrane segment spans residues 215–235; that stretch reads LWLGWGPTALRDVPFSALYWF. Residues 236–255 are Mitochondrial intermembrane-facing; the sequence is NYELVKSWLSGLRPKDQTSV. Residues 256-276 traverse the membrane as a helical segment; it reads GISFVAGGISGMVAATLTLPF. The Mitochondrial matrix portion of the chain corresponds to 277-317; the sequence is DVVKTQRQMSLGAVEAVRVKPPRVDSTWLLLRRIRAESGTR. Residues 318-338 traverse the membrane as a helical segment; that stretch reads GLFAGFLPRIIKAAPSCAIMI. At 339–359 the chain is on the mitochondrial intermembrane side; the sequence is STYEFGKSFFQRLNQEQPLGR.

This sequence belongs to the mitochondrial carrier (TC 2.A.29) family. Post-translationally, cleaved and degraded by AFG3L2; degradation by AFG3L2 is regulated by the ability of SLC25A39 to bind iron-sulfur. In absence of mitochondrial glutathione, SLC25A39 binds iron-sulfur, preventing cleavage and degradation by AFG3L2. The presence of mitochondrial glutathione prevents iron-sulfur-binding to SLC25A39, promoting cleavage and degradation by AFG3L2. As to expression, abundant expression in bone marrow, spleen, testis and kidney.

It is found in the mitochondrion inner membrane. The catalysed reaction is glutathione(in) = glutathione(out). The activity of SLC25A39 is regulated by levels of mitochondrial glutathione via its ability to bind [2Fe-2S] iron-sulfur cluster. Upon physiological levels of mitochondrial glutathione, glutathione prevents iron-sulfur-binding to SLC25A39 promoting cleavage and degradation by AFG3L2. Upon depletion of mitochondrial glutathione, SLC25A39 binds iron-sulfur, preventing cleavage and degradation by AFG3L2. In terms of biological role, mitochondrial transporter required for glutathione import into mitochondria. Glutathione, which plays key roles in oxidative metabolism, is produced exclusively in the cytosol and is imported in many organelles. Mitochondrial glutathione is required for the activity and stability of proteins containing iron-sulfur clusters, as well as erythropoiesis. This is Mitochondrial glutathione transporter SLC25A39 from Mus musculus (Mouse).